The chain runs to 637 residues: 1-deoxy-D-xylulose-5-phosphate synthase (637 aa).

Residues H82 and 123-125 (GHA) contribute to the thiamine diphosphate site. D154 serves as a coordination point for Mg(2+). Thiamine diphosphate contacts are provided by residues 155-156 (GS), N183, Y295, and E378. N183 is a Mg(2+) binding site.

It belongs to the transketolase family. DXPS subfamily. As to quaternary structure, homodimer. It depends on Mg(2+) as a cofactor. Requires thiamine diphosphate as cofactor.

It carries out the reaction D-glyceraldehyde 3-phosphate + pyruvate + H(+) = 1-deoxy-D-xylulose 5-phosphate + CO2. It functions in the pathway metabolic intermediate biosynthesis; 1-deoxy-D-xylulose 5-phosphate biosynthesis; 1-deoxy-D-xylulose 5-phosphate from D-glyceraldehyde 3-phosphate and pyruvate: step 1/1. Catalyzes the acyloin condensation reaction between C atoms 2 and 3 of pyruvate and glyceraldehyde 3-phosphate to yield 1-deoxy-D-xylulose-5-phosphate (DXP). The protein is 1-deoxy-D-xylulose-5-phosphate synthase of Lawsonia intracellularis (strain PHE/MN1-00).